The following is a 297-amino-acid chain: Bifunctional protein FolD 1 (297 aa).

NADP(+) contacts are provided by residues 164–166 (GRS), serine 193, and isoleucine 234.

This sequence belongs to the tetrahydrofolate dehydrogenase/cyclohydrolase family. As to quaternary structure, homodimer.

The enzyme catalyses (6R)-5,10-methylene-5,6,7,8-tetrahydrofolate + NADP(+) = (6R)-5,10-methenyltetrahydrofolate + NADPH. It carries out the reaction (6R)-5,10-methenyltetrahydrofolate + H2O = (6R)-10-formyltetrahydrofolate + H(+). It functions in the pathway one-carbon metabolism; tetrahydrofolate interconversion. In terms of biological role, catalyzes the oxidation of 5,10-methylenetetrahydrofolate to 5,10-methenyltetrahydrofolate and then the hydrolysis of 5,10-methenyltetrahydrofolate to 10-formyltetrahydrofolate. This chain is Bifunctional protein FolD 1, found in Haloarcula marismortui (strain ATCC 43049 / DSM 3752 / JCM 8966 / VKM B-1809) (Halobacterium marismortui).